A 94-amino-acid polypeptide reads, in one-letter code: Putative pterin-4-alpha-carbinolamine dehydratase (94 aa).

It belongs to the pterin-4-alpha-carbinolamine dehydratase family.

The catalysed reaction is (4aS,6R)-4a-hydroxy-L-erythro-5,6,7,8-tetrahydrobiopterin = (6R)-L-erythro-6,7-dihydrobiopterin + H2O. This chain is Putative pterin-4-alpha-carbinolamine dehydratase, found in Mycobacterium sp. (strain KMS).